The sequence spans 314 residues: uncharacterized protein (314 aa).

The next 2 membrane-spanning stretches (helical) occupy residues leucine 23–phenylalanine 43 and methionine 98–threonine 118. Gly residues predominate over residues glycine 165–threonine 184. The interval glycine 165–glutamate 314 is disordered. Residues glycine 190–threonine 202 are compositionally biased toward pro residues. Composition is skewed to low complexity over residues proline 203–threonine 212 and alanine 219–proline 232. A helical transmembrane segment spans residues proline 221–alanine 241. Residues leucine 294–glutamate 314 are compositionally biased toward basic and acidic residues.

Its subcellular location is the cell membrane. This is an uncharacterized protein from Mycobacterium tuberculosis (strain ATCC 25618 / H37Rv).